The primary structure comprises 912 residues: Protein translocase subunit SecA (912 aa).

ATP-binding positions include Gln-87, 105-109, and Asp-508; that span reads GEGKT. The disordered stretch occupies residues 869 to 912; sequence EQMQGGNAPVPVSQVTRDEPKVGRNDPCPCGSGKKYKHCHGQLS. Zn(2+) contacts are provided by Cys-896, Cys-898, Cys-907, and His-908. The segment covering 902–912 has biased composition (basic residues); it reads KKYKHCHGQLS.

This sequence belongs to the SecA family. As to quaternary structure, monomer and homodimer. Part of the essential Sec protein translocation apparatus which comprises SecA, SecYEG and auxiliary proteins SecDF-YajC and YidC. Zn(2+) is required as a cofactor.

It localises to the cell inner membrane. Its subcellular location is the cytoplasm. The catalysed reaction is ATP + H2O + cellular proteinSide 1 = ADP + phosphate + cellular proteinSide 2.. Part of the Sec protein translocase complex. Interacts with the SecYEG preprotein conducting channel. Has a central role in coupling the hydrolysis of ATP to the transfer of proteins into and across the cell membrane, serving both as a receptor for the preprotein-SecB complex and as an ATP-driven molecular motor driving the stepwise translocation of polypeptide chains across the membrane. This chain is Protein translocase subunit SecA, found in Xanthomonas axonopodis pv. citri (strain 306).